The following is a 300-amino-acid chain: MELRDLDLNLLVVFNQLLVDRRVSITAENLGLTQPAVSNALKRLRTSLQDPLFVRTHQGMEPTPYAAHLAEPVTSAMHALRNALQHHESFDPLTSERTFTLAMTDIGEIYFMPRLMDVLAHQAPNCVISTVRDSSMSLMQALQNGTVDLAVGLLPNLQTGFFQRRLLQNHYVCLCRKDHPVTREPLTLERFCSYGHVRVIAAGTGHGEVDTYMTRVGIRRDIRLEVPHFAAVGHILQRTDLLATVPIRLADCCVEPFGLSALPHPVVLPEIAINMFWHAKYHKDLANIWLRQLMFDLFTD.

The HTH lysR-type domain occupies 6–63 (LDLNLLVVFNQLLVDRRVSITAENLGLTQPAVSNALKRLRTSLQDPLFVRTHQGMEPT). The segment at residues 23-42 (VSITAENLGLTQPAVSNALK) is a DNA-binding region (H-T-H motif).

It belongs to the LysR transcriptional regulatory family.

It is found in the cytoplasm. Its function is as follows. Regulates the expression of the naphthalene (nahA-F) and salicylate (nahG-M) metabolism genes. The chain is HTH-type transcriptional activator NahR (nahR) from Pseudomonas putida (Arthrobacter siderocapsulatus).